The primary structure comprises 67 residues: Large ribosomal subunit protein bL31 (67 aa).

The Zn(2+) site is built by Cys-16, Cys-18, Cys-38, and Cys-41.

Belongs to the bacterial ribosomal protein bL31 family. Type A subfamily. As to quaternary structure, part of the 50S ribosomal subunit. Zn(2+) is required as a cofactor.

Functionally, binds the 23S rRNA. This Thioalkalivibrio sulfidiphilus (strain HL-EbGR7) protein is Large ribosomal subunit protein bL31.